A 404-amino-acid polypeptide reads, in one-letter code: Double-stranded RNA-binding protein 5 (404 aa).

2 consecutive DRBM domains span residues 1-70 (MYKN…RLSL) and 87-155 (VYKN…SLKQ). 3 disordered regions span residues 195–236 (RRRR…STEE), 263–320 (GGRT…RRNA), and 336–362 (RRRPDEALRRRRRVPRAAGGERPFSDP). Low complexity predominate over residues 263–280 (GGRTQDTASPAPAAAAAS). Residues 302–316 (AGAHAARRHAARQGG) are compositionally biased toward basic residues.

In terms of biological role, binds double-stranded RNA. In Oryza sativa subsp. japonica (Rice), this protein is Double-stranded RNA-binding protein 5 (DRB5).